Reading from the N-terminus, the 209-residue chain is Large ribosomal subunit protein uL3 (209 aa).

Residues 141–164 (RAVGSMGGSSDPSRTFKSKKMPGH) are disordered.

The protein belongs to the universal ribosomal protein uL3 family. Part of the 50S ribosomal subunit. Forms a cluster with proteins L14 and L19.

One of the primary rRNA binding proteins, it binds directly near the 3'-end of the 23S rRNA, where it nucleates assembly of the 50S subunit. The sequence is that of Large ribosomal subunit protein uL3 from Clostridium acetobutylicum (strain ATCC 824 / DSM 792 / JCM 1419 / IAM 19013 / LMG 5710 / NBRC 13948 / NRRL B-527 / VKM B-1787 / 2291 / W).